The chain runs to 116 residues: Somatostatin (116 aa).

The first 24 residues, methionine 1–glycine 24, serve as a signal peptide directing secretion. Positions alanine 25 to arginine 88 are excised as a propeptide. Alanine amide is present on alanine 43. Residues cysteine 105 and cysteine 116 are joined by a disulfide bond.

This sequence belongs to the somatostatin family. C-terminal amidation of the neuronostatin peptide is required for its biological activity, including for the regulation of mean arterial pressure.

It localises to the secreted. Functionally, inhibits the secretion of pituitary hormones, including that of growth hormone/somatotropin (GH1), PRL, ACTH, luteinizing hormone (LH) and TSH. Also impairs ghrelin- and GnRH-stimulated secretion of GH1 and LH; the inhibition of ghrelin-stimulated secretion of GH1 can be further increased by neuronostatin. May enhance low-glucose-induced glucagon release by pancreatic alpha cells. This effect may be mediated by binding to GPR107 and PKA activation. May regulate cardiac contractile function. May compromise cardiomyocyte viability. In the central nervous system, may impair memory retention and may affect hippocampal excitability. May also have anxiolytic and anorexigenic effects. May play a role in arterial pressure regulation. May inhibit basal, but not ghrelin- or GnRH-stimulated secretion of GH1 or LH, but does not affect the release of other pituitary hormones, including PRL, ACTH, FSH or TSH. Potentiates inhibitory action of somatostatin on ghrelin-stimulated secretion of GH1, but not that on GnRH-stimulated secretion of LH. This chain is Somatostatin (SST), found in Bos taurus (Bovine).